The sequence spans 189 residues: Putative manganese efflux pump MntP (189 aa).

6 consecutive transmembrane segments (helical) span residues 6–26 (IFGI…AAGV), 39–59 (LAWH…YAGL), 71–91 (WIAF…SFDA), 106–126 (LVLL…SLSV), 131–151 (VWMP…GGLM), and 169–189 (VGAG…GVFY).

The protein belongs to the MntP (TC 9.B.29) family.

The protein resides in the cell inner membrane. Its function is as follows. Probably functions as a manganese efflux pump. The sequence is that of Putative manganese efflux pump MntP from Desulfosudis oleivorans (strain DSM 6200 / JCM 39069 / Hxd3) (Desulfococcus oleovorans).